Consider the following 371-residue polypeptide: 3-dehydroquinate synthase (371 aa).

Residues 70-75 (DAEDGK), 104-108 (GAVTD), 128-129 (TT), Lys-141, and Lys-150 each bind NAD(+). Positions 183, 246, and 262 each coordinate Zn(2+).

It belongs to the sugar phosphate cyclases superfamily. Dehydroquinate synthase family. Co(2+) serves as cofactor. The cofactor is Zn(2+). It depends on NAD(+) as a cofactor.

It is found in the cytoplasm. It catalyses the reaction 7-phospho-2-dehydro-3-deoxy-D-arabino-heptonate = 3-dehydroquinate + phosphate. The protein operates within metabolic intermediate biosynthesis; chorismate biosynthesis; chorismate from D-erythrose 4-phosphate and phosphoenolpyruvate: step 2/7. Its function is as follows. Catalyzes the conversion of 3-deoxy-D-arabino-heptulosonate 7-phosphate (DAHP) to dehydroquinate (DHQ). The sequence is that of 3-dehydroquinate synthase from Saccharopolyspora erythraea (strain ATCC 11635 / DSM 40517 / JCM 4748 / NBRC 13426 / NCIMB 8594 / NRRL 2338).